Here is a 295-residue protein sequence, read N- to C-terminus: Pyridoxal 5'-phosphate synthase subunit PdxS (295 aa).

Residue D25 participates in D-ribose 5-phosphate binding. K82 functions as the Schiff-base intermediate with D-ribose 5-phosphate in the catalytic mechanism. G154 lines the D-ribose 5-phosphate pocket. R166 contacts D-glyceraldehyde 3-phosphate. D-ribose 5-phosphate is bound by residues G215 and 236–237; that span reads GS.

The protein belongs to the PdxS/SNZ family. In terms of assembly, in the presence of PdxT, forms a dodecamer of heterodimers.

It carries out the reaction aldehydo-D-ribose 5-phosphate + D-glyceraldehyde 3-phosphate + L-glutamine = pyridoxal 5'-phosphate + L-glutamate + phosphate + 3 H2O + H(+). Its pathway is cofactor biosynthesis; pyridoxal 5'-phosphate biosynthesis. Functionally, catalyzes the formation of pyridoxal 5'-phosphate from ribose 5-phosphate (RBP), glyceraldehyde 3-phosphate (G3P) and ammonia. The ammonia is provided by the PdxT subunit. Can also use ribulose 5-phosphate and dihydroxyacetone phosphate as substrates, resulting from enzyme-catalyzed isomerization of RBP and G3P, respectively. The sequence is that of Pyridoxal 5'-phosphate synthase subunit PdxS from Pasteurella multocida (strain Pm70).